The sequence spans 662 residues: Protein Aster-C (662 aa).

A disordered region spans residues M1–V33. The GRAM domain occupies E70–V176. A disordered region spans residues V212–K294. The span at V240 to A250 shows a compositional bias: polar residues. The span at L265–V276 shows a compositional bias: basic and acidic residues. The 172-residue stretch at Q326–S497 folds into the VASt domain. The interval H506–R530 is disordered. Over residues S507–L516 the composition is skewed to basic residues. The chain crosses the membrane as a helical span at residues L557–L577.

Highly expressed in the liver. Also found in the testis.

Its subcellular location is the endoplasmic reticulum membrane. The protein resides in the cell membrane. Its function is as follows. Cholesterol transporter that mediates non-vesicular transport of cholesterol from the plasma membrane (PM) to the endoplasmic reticulum (ER). Contains unique domains for binding cholesterol and the PM, thereby serving as a molecular bridge for the transfer of cholesterol from the PM to the ER. Plays a crucial role in cholesterol homeostasis and has the unique ability to localize to the PM based on the level of membrane cholesterol. In lipid-poor conditions localizes to the ER membrane and in response to excess cholesterol in the PM is recruited to the endoplasmic reticulum-plasma membrane contact sites (EPCS) which is mediated by the GRAM domain. At the EPCS, the sterol-binding VASt/ASTER domain binds to the cholesterol in the PM and facilitates its transfer from the PM to ER. The polypeptide is Protein Aster-C (Gramd1c) (Mus musculus (Mouse)).